Reading from the N-terminus, the 484-residue chain is Aspartyl/glutamyl-tRNA(Asn/Gln) amidotransferase subunit B (484 aa).

It belongs to the GatB/GatE family. GatB subfamily. Heterotrimer of A, B and C subunits.

It carries out the reaction L-glutamyl-tRNA(Gln) + L-glutamine + ATP + H2O = L-glutaminyl-tRNA(Gln) + L-glutamate + ADP + phosphate + H(+). The enzyme catalyses L-aspartyl-tRNA(Asn) + L-glutamine + ATP + H2O = L-asparaginyl-tRNA(Asn) + L-glutamate + ADP + phosphate + 2 H(+). In terms of biological role, allows the formation of correctly charged Asn-tRNA(Asn) or Gln-tRNA(Gln) through the transamidation of misacylated Asp-tRNA(Asn) or Glu-tRNA(Gln) in organisms which lack either or both of asparaginyl-tRNA or glutaminyl-tRNA synthetases. The reaction takes place in the presence of glutamine and ATP through an activated phospho-Asp-tRNA(Asn) or phospho-Glu-tRNA(Gln). The sequence is that of Aspartyl/glutamyl-tRNA(Asn/Gln) amidotransferase subunit B from Anaeromyxobacter sp. (strain K).